We begin with the raw amino-acid sequence, 157 residues long: Small ribosomal subunit protein uS7 (157 aa).

Belongs to the universal ribosomal protein uS7 family. In terms of assembly, part of the 30S ribosomal subunit. Contacts proteins S9 and S11.

In terms of biological role, one of the primary rRNA binding proteins, it binds directly to 16S rRNA where it nucleates assembly of the head domain of the 30S subunit. Is located at the subunit interface close to the decoding center, probably blocks exit of the E-site tRNA. In Polaromonas sp. (strain JS666 / ATCC BAA-500), this protein is Small ribosomal subunit protein uS7.